We begin with the raw amino-acid sequence, 338 residues long: Large ribosomal subunit protein uL10 (338 aa).

The tract at residues 302-338 (IAAQPQPAEEAEEKVEEEEEEEKEEEEALAGLGALFG) is disordered. Residues 310–329 (EEAEEKVEEEEEEEKEEEEA) are compositionally biased toward acidic residues.

It belongs to the universal ribosomal protein uL10 family. Part of the 50S ribosomal subunit. Forms part of the ribosomal stalk which helps the ribosome interact with GTP-bound translation factors. Forms a heptameric L10(L12)2(L12)2(L12)2 complex, where L10 forms an elongated spine to which the L12 dimers bind in a sequential fashion.

Forms part of the ribosomal stalk, playing a central role in the interaction of the ribosome with GTP-bound translation factors. The polypeptide is Large ribosomal subunit protein uL10 (Thermococcus sibiricus (strain DSM 12597 / MM 739)).